The primary structure comprises 468 residues: Phosphoglucosamine mutase (468 aa).

The active-site Phosphoserine intermediate is serine 112. The Mg(2+) site is built by serine 112, aspartate 254, aspartate 256, and aspartate 258. Phosphoserine is present on serine 112.

Belongs to the phosphohexose mutase family. The cofactor is Mg(2+). In terms of processing, activated by phosphorylation.

The enzyme catalyses alpha-D-glucosamine 1-phosphate = D-glucosamine 6-phosphate. Functionally, catalyzes the conversion of glucosamine-6-phosphate to glucosamine-1-phosphate. The sequence is that of Phosphoglucosamine mutase from Prochlorococcus marinus (strain MIT 9303).